A 1050-amino-acid polypeptide reads, in one-letter code: uncharacterized protein (1050 aa).

Coiled coils occupy residues 1-420, 463-627, and 692-981; these read MEKV…TAKM, YSLL…IREL, and NDSK…NLLS.

This is an uncharacterized protein from Arabidopsis thaliana (Mouse-ear cress).